A 463-amino-acid chain; its full sequence is D(2)-like dopamine receptor (463 aa).

At 1-35 the chain is on the extracellular side; it reads MDVFTQYAYNDSIFDNGTWSANETTKDETHPYNYY. N-linked (GlcNAc...) asparagine glycans are attached at residues asparagine 10, asparagine 16, and asparagine 22. A helical membrane pass occupies residues 36-58; it reads AMLLTLLIFVIVFGNVLVCMAVS. Residues 59-68 are Cytoplasmic-facing; it reads REKALQTTTN. The chain crosses the membrane as a helical span at residues 69–91; that stretch reads YLIVSLAVADLLVATLVMPWVVY. Over 92–106 the chain is Extracellular; that stretch reads LEVVGEWRFSKIHCD. Cysteine 105 and cysteine 183 are joined by a disulfide. The chain crosses the membrane as a helical span at residues 107-128; that stretch reads IFVTLDVMMCTASILNLCAISI. The Cytoplasmic portion of the chain corresponds to 129 to 149; that stretch reads DRYTAVAMPMLYNTRYSSRRR. The chain crosses the membrane as a helical span at residues 150–170; that stretch reads VTVMISVVWVLSFAISCPLLF. Topologically, residues 171–189 are extracellular; it reads GLNNTATRDQSLCFIANPA. Residues 190-214 form a helical membrane-spanning segment; that stretch reads FVVYSSIVSFYVPFIVTLLVYVQIY. The Cytoplasmic portion of the chain corresponds to 215 to 392; sequence VVLRKRRKRV…SQQKEKKATQ (178 aa). Residues 295 to 362 form a disordered region; sequence CGGSHKQPPP…KEAQGNPAPV (68 aa). Positions 315–329 are enriched in polar residues; that stretch reads PATSHQLLMSTKANA. The segment covering 341–353 has biased composition (basic and acidic residues); that stretch reads EGQRTEKNGDPTK. A helical membrane pass occupies residues 393–414; that stretch reads MLAIVLGVFIICWLPFFITHIL. Residues 415–429 lie on the Extracellular side of the membrane; that stretch reads NTHCTRCKVPAEMYN. Cysteine 418 and cysteine 421 are disulfide-bonded. A helical membrane pass occupies residues 430-451; the sequence is AFTWLGYVNSAVNPIIYTTFNV. Residues 452–463 lie on the Cytoplasmic side of the membrane; the sequence is EFRKAFIKILHC.

This sequence belongs to the G-protein coupled receptor 1 family.

The protein resides in the cell membrane. Its function is as follows. Receptor for dopamine. In Takifugu rubripes (Japanese pufferfish), this protein is D(2)-like dopamine receptor (d215).